Here is a 428-residue protein sequence, read N- to C-terminus: Histidine--tRNA ligase (428 aa).

The protein belongs to the class-II aminoacyl-tRNA synthetase family. In terms of assembly, homodimer.

It localises to the cytoplasm. It catalyses the reaction tRNA(His) + L-histidine + ATP = L-histidyl-tRNA(His) + AMP + diphosphate + H(+). This Buchnera aphidicola subsp. Schizaphis graminum (strain Sg) protein is Histidine--tRNA ligase.